The sequence spans 225 residues: Glutathione S-transferase zeta class (225 aa).

A GST N-terminal domain is found at 10–91; sequence PKLKLYSYFR…YLEEKYPEHP (82 aa). Glutathione is bound by residues 20–25, glutamine 49, valine 63, 75–76, glutamine 115, and 119–121; these read SSCSFR, DS, and NLA. The region spanning 96–221 is the GST C-terminal domain; the sequence is DIHKKAINYQ…MPDKQPDSTS (126 aa).

It belongs to the GST superfamily. Zeta family.

The protein resides in the cytoplasm. It catalyses the reaction RX + glutathione = an S-substituted glutathione + a halide anion + H(+). In Euphorbia esula (Leafy spurge), this protein is Glutathione S-transferase zeta class.